Reading from the N-terminus, the 208-residue chain is FMN-dependent NADH:quinone oxidoreductase 1 (208 aa).

Position 10 (S10) interacts with FMN.

It belongs to the azoreductase type 1 family. Homodimer. It depends on FMN as a cofactor.

It carries out the reaction 2 a quinone + NADH + H(+) = 2 a 1,4-benzosemiquinone + NAD(+). It catalyses the reaction N,N-dimethyl-1,4-phenylenediamine + anthranilate + 2 NAD(+) = 2-(4-dimethylaminophenyl)diazenylbenzoate + 2 NADH + 2 H(+). Functionally, quinone reductase that provides resistance to thiol-specific stress caused by electrophilic quinones. Contributes to resistance to 2-methylhydroquinone (2-MHQ) and catechol. Its function is as follows. Also exhibits azoreductase activity. Catalyzes the reductive cleavage of the azo bond in aromatic azo compounds to the corresponding amines. The protein is FMN-dependent NADH:quinone oxidoreductase 1 of Bacillus subtilis (strain 168).